The chain runs to 327 residues: Undecaprenyl-phosphate 4-deoxy-4-formamido-L-arabinose transferase (327 aa).

2 helical membrane passes run 236–256 (LSIF…LLVV) and 270–290 (VFML…GMGL).

Belongs to the glycosyltransferase 2 family.

Its subcellular location is the cell inner membrane. The enzyme catalyses UDP-4-deoxy-4-formamido-beta-L-arabinose + di-trans,octa-cis-undecaprenyl phosphate = 4-deoxy-4-formamido-alpha-L-arabinopyranosyl di-trans,octa-cis-undecaprenyl phosphate + UDP. Its pathway is glycolipid biosynthesis; 4-amino-4-deoxy-alpha-L-arabinose undecaprenyl phosphate biosynthesis; 4-amino-4-deoxy-alpha-L-arabinose undecaprenyl phosphate from UDP-4-deoxy-4-formamido-beta-L-arabinose and undecaprenyl phosphate: step 1/2. The protein operates within bacterial outer membrane biogenesis; lipopolysaccharide biosynthesis. Catalyzes the transfer of 4-deoxy-4-formamido-L-arabinose from UDP to undecaprenyl phosphate. The modified arabinose is attached to lipid A and is required for resistance to polymyxin and cationic antimicrobial peptides. This Klebsiella pneumoniae subsp. pneumoniae (strain ATCC 700721 / MGH 78578) protein is Undecaprenyl-phosphate 4-deoxy-4-formamido-L-arabinose transferase.